Reading from the N-terminus, the 497-residue chain is Intermediate filament protein A (497 aa).

Positions methionine 1–leucine 32 are coil 1A. An IF rod domain is found at methionine 1 to alanine 342. Residues arginine 33–methionine 46 form a linker 1 region. Residues tyrosine 47 to leucine 184 are coil 1B. Residues glutamine 185 to asparagine 202 form a linker 12 region. The tract at residues glutamate 203–alanine 342 is coil 2. The tail stretch occupies residues glycine 343–isoleucine 497. Residues serine 375 to serine 493 form the LTD domain.

The protein belongs to the intermediate filament family. In terms of assembly, a and B can form homopolymers. As to expression, giant body muscle cells.

The protein localises to the cytoplasm. The sequence is that of Intermediate filament protein A from Ascaris suum (Pig roundworm).